The primary structure comprises 338 residues: Ketol-acid reductoisomerase (NADP(+)) (338 aa).

One can recognise a KARI N-terminal Rossmann domain in the interval 1–181 (MNIYYDKDCD…GGGRAGIIET (181 aa)). Residues 24 to 27 (YGSQ), R47, S50, S52, and 82 to 85 (DEHQ) each bind NADP(+). H107 is a catalytic residue. An NADP(+)-binding site is contributed by G133. The KARI C-terminal knotted domain occupies 182–327 (AFREETETDL…ERLRSMMPWI (146 aa)). 4 residues coordinate Mg(2+): D190, E194, E226, and E230. S251 provides a ligand contact to substrate.

This sequence belongs to the ketol-acid reductoisomerase family. The cofactor is Mg(2+).

It carries out the reaction (2R)-2,3-dihydroxy-3-methylbutanoate + NADP(+) = (2S)-2-acetolactate + NADPH + H(+). The enzyme catalyses (2R,3R)-2,3-dihydroxy-3-methylpentanoate + NADP(+) = (S)-2-ethyl-2-hydroxy-3-oxobutanoate + NADPH + H(+). Its pathway is amino-acid biosynthesis; L-isoleucine biosynthesis; L-isoleucine from 2-oxobutanoate: step 2/4. The protein operates within amino-acid biosynthesis; L-valine biosynthesis; L-valine from pyruvate: step 2/4. Functionally, involved in the biosynthesis of branched-chain amino acids (BCAA). Catalyzes an alkyl-migration followed by a ketol-acid reduction of (S)-2-acetolactate (S2AL) to yield (R)-2,3-dihydroxy-isovalerate. In the isomerase reaction, S2AL is rearranged via a Mg-dependent methyl migration to produce 3-hydroxy-3-methyl-2-ketobutyrate (HMKB). In the reductase reaction, this 2-ketoacid undergoes a metal-dependent reduction by NADPH to yield (R)-2,3-dihydroxy-isovalerate. This is Ketol-acid reductoisomerase (NADP(+)) from Nitrosococcus oceani (strain ATCC 19707 / BCRC 17464 / JCM 30415 / NCIMB 11848 / C-107).